The chain runs to 1180 residues: Chitin synthase 6 (1180 aa).

2 helical membrane passes run 108–128 and 374–394; these read FTIC…IIAF and LLLA…IAAL. Asparagine 737 carries an N-linked (GlcNAc...) asparagine glycan. 3 helical membrane-spanning segments follow: residues 762–782, 795–815, and 822–842; these read FIVF…VYLV, IPYI…ILFL, and YIGW…FLPI. The DEK-C domain occupies 1118-1175; it reads DPTDEEIKSAVQTYLANQPSLMNVTKRSVREALVAAFPNAELSYKKSMINKAIDDTLS.

Belongs to the chitin synthase family. Class V subfamily.

It localises to the cell membrane. The protein resides in the cytoplasmic vesicle membrane. It carries out the reaction [(1-&gt;4)-N-acetyl-beta-D-glucosaminyl](n) + UDP-N-acetyl-alpha-D-glucosamine = [(1-&gt;4)-N-acetyl-beta-D-glucosaminyl](n+1) + UDP + H(+). In terms of biological role, polymerizes chitin, a structural polymer of the cell wall and septum, by transferring the sugar moiety of UDP-GlcNAc to the non-reducing end of the growing chitin polymer. Plays a crucial role during infection and allows the fungus to overcome the resistance of the plant that checks growth of the pathogen and eventually eliminates it. The protein is Chitin synthase 6 of Mycosarcoma maydis (Corn smut fungus).